The chain runs to 435 residues: Probable long-chain-alcohol O-fatty-acyltransferase 11 (435 aa).

Transmembrane regions (helical) follow at residues 7-27 (NLIKVSVSVIISISYCYYVPT), 36-56 (FLSVLPICALFRVLPLFFASV), 59-79 (SGYTALFISWLANFKLILFSF), 120-140 (PIEVLFSNQFVTKVVILSVVL), 149-169 (IYPIVLFVLYPLHLYLVLEIL), 200-220 (DFWGHWWTLMLPTILLPDVYA), 238-258 (LGVFVTFLVSGALHEFLFFYI), 263-283 (PTGEVTLFFVLHGVCIVAYDA), 300-320 (CLILQVMVMGFVVVTAGWLFF), 363-383 (FFTGFVMRKLFNGALFFIGFV), and 406-426 (FFIGFVIRKLFNEAMFFIGFV).

This sequence belongs to the wax synthase family.

It localises to the membrane. It catalyses the reaction a long chain fatty alcohol + a fatty acyl-CoA = a wax ester + CoA. Catalyzes the final step in the synthesis of long-chain linear esters (waxes). This is Probable long-chain-alcohol O-fatty-acyltransferase 11 from Arabidopsis thaliana (Mouse-ear cress).